The chain runs to 191 residues: MSETFNQIKESFIEYLLFQYRFKSRIAVWVLNYIKVNEAKLANIHFVDTKINHHETLEIAEVGSHASAIQFTKRNIKLMNTNEIFDYIANHNCAFDIQIHFANVSKREQRLDDLIVAQLTESPSYQTYLHDLNSMAIDRHKHALLIDYLLHNIDLSLQMNEKQRFYQLTQILNTLKLVNKHNQFEDLADDN.

Belongs to the UPF0302 family.

This is UPF0302 protein USA300HOU_1400 from Staphylococcus aureus (strain USA300 / TCH1516).